The chain runs to 234 residues: Uridylate kinase (234 aa).

Residue 9 to 12 (KLSG) coordinates ATP. Residue G51 coordinates UMP. Residues G52 and R56 each contribute to the ATP site. Residues D71 and 132–139 (CGNPFFTT) contribute to the UMP site. ATP is bound by residues T159, Y165, and D168.

The protein belongs to the UMP kinase family. Homohexamer.

The protein localises to the cytoplasm. It catalyses the reaction UMP + ATP = UDP + ADP. The protein operates within pyrimidine metabolism; CTP biosynthesis via de novo pathway; UDP from UMP (UMPK route): step 1/1. Inhibited by UTP. In terms of biological role, catalyzes the reversible phosphorylation of UMP to UDP. The polypeptide is Uridylate kinase (Prochlorococcus marinus (strain AS9601)).